A 1220-amino-acid polypeptide reads, in one-letter code: Plasma membrane calcium-transporting ATPase 3 (1220 aa).

Residues 1–20 are compositionally biased toward polar residues; that stretch reads MGDMANSSIEFHPKPQQQRD. Residues 1 to 23 are disordered; it reads MGDMANSSIEFHPKPQQQRDVPQ. Over 1 to 97 the chain is Cytoplasmic; the sequence is MGDMANSSIE…NFIPPKQPKT (97 aa). Ser8 bears the Phosphoserine mark. The chain crosses the membrane as a helical span at residues 98 to 118; the sequence is FLQLVWEALQDVTLIILEVAA. Residues 119–155 lie on the Extracellular side of the membrane; the sequence is IVSLGLSFYAPPGEESEACGNVSGGAEDEGEAEAGWI. A helical membrane pass occupies residues 156-176; the sequence is EGAAILLSVICVVLVTAFNDW. Residues 177–364 lie on the Cytoplasmic side of the membrane; that stretch reads SKEKQFRGLQ…KEKSVLQGKL (188 aa). The interval 298–355 is disordered; it reads EEEKKDKKGKQQDGAMESSQTKAKKQDGAVAMEMQPLKSAEGGEMEEREKKKANAPKK. 2 stretches are compositionally biased toward basic and acidic residues: residues 299–308 and 342–355; these read EEKKDKKGKQ and MEER…APKK. A helical membrane pass occupies residues 365-384; that stretch reads TKLAVQIGKAGLVMSAITVI. Residues 385–417 are Extracellular-facing; that stretch reads ILVLYFVIETFVVEGRTWLAECTPVYVQYFVKF. A helical transmembrane segment spans residues 418–435; the sequence is FIIGVTVLVVAVPEGLPL. The Cytoplasmic segment spans residues 436 to 849; the sequence is AVTISLAYSV…MWGRNVYDSI (414 aa). The 4-aspartylphosphate intermediate role is filled by Asp473. Mg(2+)-binding residues include Asp794 and Asp798. A helical transmembrane segment spans residues 850 to 869; it reads SKFLQFQLTVNVVAVIVAFT. Residues 870-879 lie on the Extracellular side of the membrane; sequence GACITQDSPL. A helical transmembrane segment spans residues 880–900; that stretch reads KAVQMLWVNLIMDTFASLALA. The Cytoplasmic portion of the chain corresponds to 901–920; the sequence is TEPPTESLLLRKPYGRDKPL. A helical membrane pass occupies residues 921–943; sequence ISRTMMKNILGHAVYQLAIIFTL. Topologically, residues 944 to 961 are extracellular; the sequence is LFVGELFFDIDSGRNAPL. Residues 962–983 form a helical membrane-spanning segment; the sequence is HSPPSEHYTIIFNTFVMMQLFN. Residues 984-1002 lie on the Cytoplasmic side of the membrane; that stretch reads EINARKIHGERNVFDGIFS. The chain crosses the membrane as a helical span at residues 1003–1024; the sequence is NPIFCTIVLGTFGIQIVIVQFG. At 1025–1034 the chain is on the extracellular side; the sequence is GKPFSCSPLS. Residues 1035-1056 form a helical membrane-spanning segment; that stretch reads TEQWLWCLFVGVGELVWGQVIA. Over 1057–1220 the chain is Cytoplasmic; the sequence is TIPTSQLKCL…SPLHSVETSL (164 aa). At Thr1079 the chain carries Phosphothreonine. The segment at 1097–1114 is calmodulin-binding subdomain A; sequence LRRGQILWFRGLNRIQTQ. Thr1113 bears the Phosphothreonine; by PKC mark. The tract at residues 1115–1124 is calmodulin-binding subdomain B; that stretch reads IRVVKAFRSS. The segment at 1166 to 1186 is disordered; the sequence is ENEERLRAPPPPSPNQNNNAI.

Belongs to the cation transport ATPase (P-type) (TC 3.A.3) family. Type IIB subfamily. As to quaternary structure, interacts with PDZD11. Interacts (via N-terminus) with YWHAE. Highly expressed in the cerebellum. Expressed in adrenal glands.

It is found in the cell membrane. The protein resides in the presynaptic cell membrane. It catalyses the reaction Ca(2+)(in) + ATP + H2O = Ca(2+)(out) + ADP + phosphate + H(+). Its activity is regulated as follows. Down-regulated by YWHAE. Functionally, ATP-driven Ca(2+) ion pump involved in the maintenance of basal intracellular Ca(2+) levels at the presynaptic terminals. Uses ATP as an energy source to transport cytosolic Ca(2+) ions across the plasma membrane to the extracellular compartment. May counter-transport protons, but the mechanism and the stoichiometry of this Ca(2+)/H(+) exchange remains to be established. This Homo sapiens (Human) protein is Plasma membrane calcium-transporting ATPase 3.